Consider the following 216-residue polypeptide: Pyrrolidone-carboxylate peptidase (216 aa).

Residues Glu-80, Cys-143, and His-168 contribute to the active site.

Belongs to the peptidase C15 family. As to quaternary structure, homotetramer.

The protein localises to the cytoplasm. It catalyses the reaction Release of an N-terminal pyroglutamyl group from a polypeptide, the second amino acid generally not being Pro.. In terms of biological role, removes 5-oxoproline from various penultimate amino acid residues except L-proline. The protein is Pyrrolidone-carboxylate peptidase of Cupriavidus pinatubonensis (strain JMP 134 / LMG 1197) (Cupriavidus necator (strain JMP 134)).